Here is a 347-residue protein sequence, read N- to C-terminus: NADH-quinone oxidoreductase subunit H (347 aa).

Transmembrane regions (helical) follow at residues 13 to 33 (IIMI…IAYV), 50 to 70 (PNVV…KFVF), 82 to 102 (AVFL…WAVV), 115 to 135 (VGIL…IMGG), 161 to 181 (IGFV…TDIV), 198 to 218 (FLDW…ISAL), 263 to 283 (CALT…IWIL), 286 to 306 (VPGI…FAMV), and 321 to 341 (LGWK…AFVL).

This sequence belongs to the complex I subunit 1 family. As to quaternary structure, NDH-1 is composed of 14 different subunits. Subunits NuoA, H, J, K, L, M, N constitute the membrane sector of the complex.

The protein resides in the cell inner membrane. It carries out the reaction a quinone + NADH + 5 H(+)(in) = a quinol + NAD(+) + 4 H(+)(out). Functionally, NDH-1 shuttles electrons from NADH, via FMN and iron-sulfur (Fe-S) centers, to quinones in the respiratory chain. The immediate electron acceptor for the enzyme in this species is believed to be ubiquinone. Couples the redox reaction to proton translocation (for every two electrons transferred, four hydrogen ions are translocated across the cytoplasmic membrane), and thus conserves the redox energy in a proton gradient. This subunit may bind ubiquinone. In Rhizobium johnstonii (strain DSM 114642 / LMG 32736 / 3841) (Rhizobium leguminosarum bv. viciae), this protein is NADH-quinone oxidoreductase subunit H.